The chain runs to 237 residues: MPKTVKNPKNNKSRSRGAPIQVAESIGSGSAKIKKKIRDIERLIKKNPNLPADKKIEYDRALKGLKVELQNSQVQNKAKVLAKKYHMVRFFERKKAVRKLKNLRKEFERISQTGIRKDIKKARKQLRHGEIDLAYVILFPKTEKYISLYPSPNDEDQTDPNVIKGLKITEERRREFRKYIEKLMEEGKLPFSIDDALQGKNIRLDNDKTQKAVLTEEIDAPEQKQDEQQEEQDDFFE.

The interval M1 to E24 is disordered. Coiled-coil stretches lie at residues D53–T113 and L166–E186. The tract at residues N206 to E237 is disordered. Residues Q228–E237 are compositionally biased toward acidic residues.

The protein belongs to the EFG1 family.

Its subcellular location is the nucleus. The protein localises to the nucleolus. Its function is as follows. Involved in rRNA processing. In Candida albicans (strain SC5314 / ATCC MYA-2876) (Yeast), this protein is rRNA-processing protein EFG1.